The following is a 134-amino-acid chain: ATP synthase epsilon chain (134 aa).

Belongs to the ATPase epsilon chain family. F-type ATPases have 2 components, CF(1) - the catalytic core - and CF(0) - the membrane proton channel. CF(1) has five subunits: alpha(3), beta(3), gamma(1), delta(1), epsilon(1). CF(0) has three main subunits: a, b and c.

It is found in the cell membrane. Its function is as follows. Produces ATP from ADP in the presence of a proton gradient across the membrane. This chain is ATP synthase epsilon chain, found in Listeria monocytogenes serotype 4b (strain F2365).